The primary structure comprises 1368 residues: DNA-directed RNA polymerase subunit beta (1368 aa).

This sequence belongs to the RNA polymerase beta chain family. As to quaternary structure, the RNAP catalytic core consists of 2 alpha, 1 beta, 1 beta' and 1 omega subunit. When a sigma factor is associated with the core the holoenzyme is formed, which can initiate transcription.

It catalyses the reaction RNA(n) + a ribonucleoside 5'-triphosphate = RNA(n+1) + diphosphate. In terms of biological role, DNA-dependent RNA polymerase catalyzes the transcription of DNA into RNA using the four ribonucleoside triphosphates as substrates. This chain is DNA-directed RNA polymerase subunit beta, found in Legionella pneumophila subsp. pneumophila (strain Philadelphia 1 / ATCC 33152 / DSM 7513).